The following is a 239-amino-acid chain: Eukaryotic translation initiation factor 6 (239 aa).

This sequence belongs to the eIF-6 family. As to quaternary structure, monomer. Associates with the 60S ribosomal subunit.

It is found in the cytoplasm. Its subcellular location is the nucleus. It localises to the nucleolus. Its function is as follows. Binds to the 60S ribosomal subunit and prevents its association with the 40S ribosomal subunit to form the 80S initiation complex in the cytoplasm. May also be involved in ribosome biogenesis. The sequence is that of Eukaryotic translation initiation factor 6 from Entamoeba dispar (strain ATCC PRA-260 / SAW760).